The following is a 448-amino-acid chain: Mitochondrial distribution and morphology protein 10 (448 aa).

The protein belongs to the MDM10 family. In terms of assembly, component of the ER-mitochondria encounter structure (ERMES) or MDM complex, composed of MMM1, MDM10, MDM12 and MDM34. Associates with the mitochondrial outer membrane sorting assembly machinery SAM(core) complex.

Its subcellular location is the mitochondrion outer membrane. In terms of biological role, component of the ERMES/MDM complex, which serves as a molecular tether to connect the endoplasmic reticulum and mitochondria. Components of this complex are involved in the control of mitochondrial shape and protein biogenesis and may function in phospholipid exchange. MDM10 is involved in the late assembly steps of the general translocase of the mitochondrial outer membrane (TOM complex). Functions in the TOM40-specific route of the assembly of outer membrane beta-barrel proteins, including the association of TOM40 with the receptor TOM22 and small TOM proteins. Can associate with the SAM(core) complex as well as the MDM12-MMM1 complex, both involved in late steps of the major beta-barrel assembly pathway, that is responsible for biogenesis of all outer membrane beta-barrel proteins. May act as a switch that shuttles between both complexes and channels precursor proteins into the TOM40-specific pathway. Plays a role in mitochondrial morphology and in the inheritance of mitochondria. This chain is Mitochondrial distribution and morphology protein 10, found in Zygosaccharomyces rouxii (strain ATCC 2623 / CBS 732 / NBRC 1130 / NCYC 568 / NRRL Y-229).